The primary structure comprises 273 residues: SKA complex subunit 1 homolog (273 aa).

A coiled-coil region spans residues 77 to 97; sequence KKLVQRSLKEEEKLQHMLANL.

This sequence belongs to the SKA1 family.

The protein is SKA complex subunit 1 homolog of Zea mays (Maize).